The sequence spans 212 residues: uncharacterized protein (212 aa).

In terms of domain architecture, Toprim spans 105–187 (NTIYLVEGDF…QVKVVQLKGK (83 aa)).

This is an uncharacterized protein from Mycoplasma pneumoniae (strain ATCC 29342 / M129 / Subtype 1) (Mycoplasmoides pneumoniae).